Consider the following 381-residue polypeptide: Pectin lyase 1 (381 aa).

Positions Met-1–Ala-20 are cleaved as a signal peptide. Intrachain disulfides connect Cys-83-Cys-102 and Cys-92-Cys-227. Asn-130 carries an N-linked (GlcNAc...) asparagine glycan. Arg-257 is an active-site residue. Cys-324 and Cys-332 are disulfide-bonded.

The protein belongs to the polysaccharide lyase 1 family.

Its subcellular location is the secreted. It catalyses the reaction Eliminative cleavage of (1-&gt;4)-alpha-D-galacturonan methyl ester to give oligosaccharides with 4-deoxy-6-O-methyl-alpha-D-galact-4-enuronosyl groups at their non-reducing ends.. Its function is as follows. Pectinolytic enzymes consist of four classes of enzymes: pectin lyase, polygalacturonase, pectin methylesterase and rhamnogalacturonase. Among pectinolytic enzymes, pectin lyase is the most important in depolymerization of pectin, since it cleaves internal glycosidic bonds of highly methylated pectins. This Aspergillus oryzae (strain ATCC 42149 / RIB 40) (Yellow koji mold) protein is Pectin lyase 1 (pel1).